The sequence spans 437 residues: Acyl-coenzyme A thioesterase 2, chloroplastic (437 aa).

The transit peptide at 1–13 (MDLSSSPNHPITV) directs the protein to the chloroplast. 2 HotDog ACOT-type domains span residues 89 to 211 (ILYN…RDSK) and 287 to 404 (RDTR…RPEA).

The protein belongs to the acyl coenzyme A hydrolase family. Mostly expressed at low levels in glandular trichomes (lupulin glands), and, to a lower extent, in stems, leaves, flowers and cones.

Its subcellular location is the plastid. It localises to the chloroplast. Functionally, acyl-CoA thioesterases are a group of enzymes that catalyze the hydrolysis of acyl-CoAs to the free fatty acid and coenzyme A (CoASH), providing the potential to regulate intracellular levels of acyl-CoAs, free fatty acids and CoASH. In Humulus lupulus (European hop), this protein is Acyl-coenzyme A thioesterase 2, chloroplastic.